The sequence spans 785 residues: Copal-8-ol diphosphate hydratase TPSSA3, chloroplastic (785 aa).

Position 240 (Arg-240) interacts with substrate. Positions 372 and 374 each coordinate Mg(2+). The DXDD motif motif lies at 372 to 375 (DIDD). Arg-459 is a binding site for substrate.

Belongs to the terpene synthase family. The cofactor is Mg(2+).

The protein localises to the plastid. It localises to the chloroplast. The catalysed reaction is (2E,6E,10E)-geranylgeranyl diphosphate + H2O = 8-hydroxycopalyl diphosphate. The protein operates within secondary metabolite biosynthesis; terpenoid biosynthesis. Its function is as follows. Involved in the biosynthesis of labdane-type diterpenoid including sclareol, a diterpene-diol that is used as fragrance and flavoring, and has anticancer effects (able to kill leukemic and colon cancer cells by apoptosis). Sclareol can also be used as synthesis precursor of ambergris substitution fragance products such as ambrox. Terpene synthase that produces 8-hydroxycopalyl diphosphate from geranylgeranyl diphosphate (GGPP). This is Copal-8-ol diphosphate hydratase TPSSA3, chloroplastic from Salvia sclarea (Clary sage).